The sequence spans 522 residues: Neuropeptide FF receptor 2 (522 aa).

Residues 1–147 (MNSFFGTPAA…NYYLHQPQVA (147 aa)) lie on the Extracellular side of the membrane. The segment at 25–49 (KEAGRERRALSVQQRGGPAWSGSLE) is disordered. N-linked (GlcNAc...) asparagine glycans are attached at residues N110, N122, and N133. The chain crosses the membrane as a helical span at residues 148–168 (AIFIISYFLIFFLCMMGNTVV). Residues 169–184 (CFIVMRNKHMHTVTNL) are Cytoplasmic-facing. The chain crosses the membrane as a helical span at residues 185–205 (FILNLAISDLLVGIFCMPITL). Residues 206-221 (LDNIIAGWPFGNTMCK) are Extracellular-facing. An intrachain disulfide couples C220 to C308. A helical membrane pass occupies residues 222–242 (ISGLVQGISVAASVFTLVAIA). Topologically, residues 243-262 (VDRFQCVVYPFKPKLTIKTA) are cytoplasmic. The chain crosses the membrane as a helical span at residues 263 to 283 (FVIIMIIWVLAITIMSPSAVM). Topologically, residues 284-319 (LHVQEEKYYRVRLNSQNKTSPVYWCREDWPNQEMRK) are extracellular. N300 carries N-linked (GlcNAc...) asparagine glycosylation. A helical membrane pass occupies residues 320–340 (IYTTVLFANIYLAPLSLIVIM). The Cytoplasmic segment spans residues 341–377 (YGRIGISLFRAAVPHTGRKNQEQWHVVSRKKQKIIKM). The chain crosses the membrane as a helical span at residues 378–398 (LLIVALLFILSWLPLWTLMML). The Extracellular portion of the chain corresponds to 399-413 (SDYADLSPNELQIIN). The chain crosses the membrane as a helical span at residues 414 to 434 (IYIYPFAHWLAFGNSSVNPII). The Cytoplasmic segment spans residues 435 to 522 (YGFFNENFRR…LKETTNSSEI (88 aa)).

This sequence belongs to the G-protein coupled receptor 1 family. As to expression, isoform 1 is abundant in placenta. Relatively highly expressed in thymus, testis, and small intestine. Expressed at low levels in several tissues including spleen, prostate, brain, heart, ovary, colon, kidney, lung, liver and pancreas and not expressed in skeletal muscle and leukocytes. Isoform 2 expression is highest in placenta (but at relatively low level compared to isoform 1). Very low level of expression in numerous tissues including adipose tissue and many brain regions. Isoform 3 is expressed in brain and heart and, at lower levels, in kidney, liver, lung and pancreas.

The protein resides in the cell membrane. In terms of biological role, receptor for NPAF (A-18-F-amide) and NPFF (F-8-F-amide) neuropeptides, also known as morphine-modulating peptides. Can also be activated by a variety of naturally occurring or synthetic FMRF-amide like ligands. This receptor mediates its action by association with G proteins that activate a phosphatidylinositol-calcium second messenger system. The protein is Neuropeptide FF receptor 2 of Homo sapiens (Human).